Reading from the N-terminus, the 242-residue chain is Ubiquitin-conjugating enzyme E2 6 (242 aa).

The Cytoplasmic segment spans residues 1–217 (MASRQAYKRL…QPAGNGTTSN (217 aa)). One can recognise a UBC core domain in the interval 5 to 163 (QAYKRLSKEY…FPELAEQNRR (159 aa)). The Glycyl thioester intermediate role is filled by Cys87. Residues 218 to 240 (SIGRSLLFVLFSLAALLVAVCYT) traverse the membrane as a helical segment.

The protein belongs to the ubiquitin-conjugating enzyme family.

It localises to the endoplasmic reticulum membrane. The catalysed reaction is S-ubiquitinyl-[E1 ubiquitin-activating enzyme]-L-cysteine + [E2 ubiquitin-conjugating enzyme]-L-cysteine = [E1 ubiquitin-activating enzyme]-L-cysteine + S-ubiquitinyl-[E2 ubiquitin-conjugating enzyme]-L-cysteine.. Its pathway is protein modification; protein ubiquitination. Its function is as follows. Catalyzes the covalent attachment of ubiquitin to other proteins. Functions in degradation of misfolded or regulated proteins localized in the endoplasmic reticulum (ER) lumen or membrane via the ubiquitin-proteasome system. Cognate E2 conjugating enzyme for the DOA10 ubiquitin ligase complex, which is part of the ERAD-C pathway responsible for the rapid degradation of membrane proteins with misfolded cytoplasmic domains. The sequence is that of Ubiquitin-conjugating enzyme E2 6 (UBC6) from Eremothecium gossypii (strain ATCC 10895 / CBS 109.51 / FGSC 9923 / NRRL Y-1056) (Yeast).